The chain runs to 78 residues: Large ribosomal subunit protein bL28 (78 aa).

It belongs to the bacterial ribosomal protein bL28 family.

The chain is Large ribosomal subunit protein bL28 from Pasteurella multocida (strain Pm70).